The primary structure comprises 491 residues: Proline--tRNA ligase (491 aa).

Belongs to the class-II aminoacyl-tRNA synthetase family. ProS type 3 subfamily. In terms of assembly, homodimer.

Its subcellular location is the cytoplasm. The catalysed reaction is tRNA(Pro) + L-proline + ATP = L-prolyl-tRNA(Pro) + AMP + diphosphate. Its function is as follows. Catalyzes the attachment of proline to tRNA(Pro) in a two-step reaction: proline is first activated by ATP to form Pro-AMP and then transferred to the acceptor end of tRNA(Pro). The protein is Proline--tRNA ligase of Amoebophilus asiaticus (strain 5a2).